We begin with the raw amino-acid sequence, 302 residues long: Ribosomal RNA small subunit methyltransferase H (302 aa).

S-adenosyl-L-methionine-binding positions include 43–45, Asp-62, Phe-89, Asp-105, and His-112; that span reads GGH. Positions 276–302 are disordered; sequence EIANNPRSRSAKLRIAEKQAETGDEDN.

Belongs to the methyltransferase superfamily. RsmH family.

Its subcellular location is the cytoplasm. The enzyme catalyses cytidine(1402) in 16S rRNA + S-adenosyl-L-methionine = N(4)-methylcytidine(1402) in 16S rRNA + S-adenosyl-L-homocysteine + H(+). Specifically methylates the N4 position of cytidine in position 1402 (C1402) of 16S rRNA. This chain is Ribosomal RNA small subunit methyltransferase H, found in Nostoc sp. (strain PCC 7120 / SAG 25.82 / UTEX 2576).